Reading from the N-terminus, the 230-residue chain is Flagellar L-ring protein (230 aa).

The N-terminal stretch at 1 to 21 (MMLKTVLRLPVCAALLALAAG) is a signal peptide. The N-palmitoyl cysteine moiety is linked to residue cysteine 22. Cysteine 22 carries the S-diacylglycerol cysteine lipid modification. The interval 34 to 53 (PLTAPPPPPPQPSARPNGSI) is disordered. The segment covering 36-46 (TAPPPPPPQPS) has biased composition (pro residues).

The protein belongs to the FlgH family. As to quaternary structure, the basal body constitutes a major portion of the flagellar organelle and consists of four rings (L,P,S, and M) mounted on a central rod.

Its subcellular location is the cell outer membrane. The protein localises to the bacterial flagellum basal body. Functionally, assembles around the rod to form the L-ring and probably protects the motor/basal body from shearing forces during rotation. This Bordetella bronchiseptica (strain ATCC BAA-588 / NCTC 13252 / RB50) (Alcaligenes bronchisepticus) protein is Flagellar L-ring protein.